A 394-amino-acid chain; its full sequence is NADH-quinone oxidoreductase subunit D 2 (394 aa).

Belongs to the complex I 49 kDa subunit family. As to quaternary structure, NDH-1 is composed of 14 different subunits. Subunits NuoB, C, D, E, F, and G constitute the peripheral sector of the complex.

The protein resides in the cell membrane. It catalyses the reaction a quinone + NADH + 5 H(+)(in) = a quinol + NAD(+) + 4 H(+)(out). Functionally, NDH-1 shuttles electrons from NADH, via FMN and iron-sulfur (Fe-S) centers, to quinones in the respiratory chain. The immediate electron acceptor for the enzyme in this species is believed to be a menaquinone. Couples the redox reaction to proton translocation (for every two electrons transferred, four hydrogen ions are translocated across the cytoplasmic membrane), and thus conserves the redox energy in a proton gradient. In Streptomyces griseus subsp. griseus (strain JCM 4626 / CBS 651.72 / NBRC 13350 / KCC S-0626 / ISP 5235), this protein is NADH-quinone oxidoreductase subunit D 2.